The sequence spans 413 residues: uncharacterized protein (413 aa).

This is an uncharacterized protein from Mycobacterium tuberculosis (strain ATCC 25618 / H37Rv).